Consider the following 360-residue polypeptide: Phosphate acyltransferase (360 aa).

It belongs to the PlsX family. As to quaternary structure, homodimer. Probably interacts with PlsY.

It is found in the cytoplasm. The catalysed reaction is a fatty acyl-[ACP] + phosphate = an acyl phosphate + holo-[ACP]. It participates in lipid metabolism; phospholipid metabolism. In terms of biological role, catalyzes the reversible formation of acyl-phosphate (acyl-PO(4)) from acyl-[acyl-carrier-protein] (acyl-ACP). This enzyme utilizes acyl-ACP as fatty acyl donor, but not acyl-CoA. The protein is Phosphate acyltransferase of Janthinobacterium sp. (strain Marseille) (Minibacterium massiliensis).